Here is a 434-residue protein sequence, read N- to C-terminus: GPI mannosyltransferase 2 (434 aa).

10 helical membrane-spanning segments follow: residues 22 to 42 (LSLA…GCPG), 109 to 129 (ILSF…SVLA), 145 to 165 (GALI…GAFL), 170 to 190 (GESL…SSLL), 210 to 230 (LFSI…LFAF), 252 to 272 (LGVI…PQWI), 311 to 331 (YWTL…FLMC), 354 to 374 (LAAP…VQII), 377 to 397 (ISSG…SHVA), and 411 to 431 (IAIQ…GSFL).

This sequence belongs to the PIGV family.

Its subcellular location is the endoplasmic reticulum membrane. It participates in glycolipid biosynthesis; glycosylphosphatidylinositol-anchor biosynthesis. Its function is as follows. Mannosyltransferase involved in glycosylphosphatidylinositol-anchor biosynthesis. Transfers the second mannose to the glycosylphosphatidylinositol during GPI precursor assembly. The sequence is that of GPI mannosyltransferase 2 (gpi18) from Aspergillus oryzae (strain ATCC 42149 / RIB 40) (Yellow koji mold).